Here is a 214-residue protein sequence, read N- to C-terminus: Protein transport protein SEC22 (214 aa).

At 1–192 the chain is on the cytoplasmic side; it reads MIKSTLIFRD…QKINFDLLLS (192 aa). A Longin domain is found at 6–117; sequence LIFRDDGLPL…YAFVSFDNFL (112 aa). Positions 132 to 192 constitute a v-SNARE coiled-coil homology domain; sequence NLDQLNSDLL…QKINFDLLLS (61 aa). Residues 193 to 213 traverse the membrane as a helical; Anchor for type IV membrane protein segment; the sequence is QYAPVALIGLFFLFLVWWLVF. Residue Arg214 is a topological domain, vesicular.

Belongs to the synaptobrevin family.

It is found in the membrane. The protein resides in the endoplasmic reticulum membrane. The protein localises to the golgi apparatus membrane. Its function is as follows. Required for transport from the ER to the Golgi complex. The protein is Protein transport protein SEC22 (SEC22) of Eremothecium gossypii (strain ATCC 10895 / CBS 109.51 / FGSC 9923 / NRRL Y-1056) (Yeast).